A 624-amino-acid chain; its full sequence is Chaperone protein HtpG (624 aa).

Positions 1-336 (MSMKGQETRG…SNDLPLNVSR (336 aa)) are a; substrate-binding. The tract at residues 337–552 (EILQDSRVTQ…ADEMSTQMAK (216 aa)) is b. The c stretch occupies residues 553–624 (LFAAAGQQAP…IRRMNQLLTA (72 aa)).

It belongs to the heat shock protein 90 family. As to quaternary structure, homodimer.

It localises to the cytoplasm. Functionally, molecular chaperone. Has ATPase activity. The chain is Chaperone protein HtpG from Yersinia enterocolitica serotype O:8 / biotype 1B (strain NCTC 13174 / 8081).